A 103-amino-acid polypeptide reads, in one-letter code: MYAIVRAGGRQEKVSVDDVVTIDRVAKEAGDTLNLEPLLVVDNGKVVSDAAELNKYQVTAEVLGEVTGPKIKILKYKSKTGYKRRLGHRQKYTQIRVTGIAAK.

It belongs to the bacterial ribosomal protein bL21 family. Part of the 50S ribosomal subunit. Contacts protein L20.

Functionally, this protein binds to 23S rRNA in the presence of protein L20. The sequence is that of Large ribosomal subunit protein bL21 from Thermobifida fusca (strain YX).